A 445-amino-acid chain; its full sequence is UPF0210 protein SPG_0223 (445 aa).

It belongs to the UPF0210 family. As to quaternary structure, homodimer.

This is UPF0210 protein SPG_0223 from Streptococcus pneumoniae serotype 19F (strain G54).